A 308-amino-acid polypeptide reads, in one-letter code: ADP-L-glycero-D-manno-heptose-6-epimerase (308 aa).

Residues 10–11, 31–32, Lys-38, Lys-53, 75–79, and Asn-92 contribute to the NADP(+) site; these read FI, DN, and EGACS. Tyr-139 (proton acceptor) is an active-site residue. Lys-143 is a binding site for NADP(+). Residue Asn-168 participates in substrate binding. NADP(+) is bound by residues Val-169 and Lys-177. The active-site Proton acceptor is Lys-177. Residues Ser-179, His-186, 200–203, Arg-208, and Tyr-271 contribute to the substrate site; that span reads FAGS.

Belongs to the NAD(P)-dependent epimerase/dehydratase family. HldD subfamily. Homopentamer. NADP(+) serves as cofactor.

It carries out the reaction ADP-D-glycero-beta-D-manno-heptose = ADP-L-glycero-beta-D-manno-heptose. It functions in the pathway nucleotide-sugar biosynthesis; ADP-L-glycero-beta-D-manno-heptose biosynthesis; ADP-L-glycero-beta-D-manno-heptose from D-glycero-beta-D-manno-heptose 7-phosphate: step 4/4. It participates in bacterial outer membrane biogenesis; LOS core biosynthesis. Catalyzes the interconversion between ADP-D-glycero-beta-D-manno-heptose and ADP-L-glycero-beta-D-manno-heptose via an epimerization at carbon 6 of the heptose. This Haemophilus influenzae (strain ATCC 51907 / DSM 11121 / KW20 / Rd) protein is ADP-L-glycero-D-manno-heptose-6-epimerase.